Here is an 885-residue protein sequence, read N- to C-terminus: Leucine--tRNA ligase (885 aa).

The short motif at 46-56 (PYPSGALHMGH) is the 'HIGH' region element. The 'KMSKS' region signature appears at 638 to 642 (KMSKS). Lys-641 serves as a coordination point for ATP.

This sequence belongs to the class-I aminoacyl-tRNA synthetase family.

It localises to the cytoplasm. The catalysed reaction is tRNA(Leu) + L-leucine + ATP = L-leucyl-tRNA(Leu) + AMP + diphosphate. The chain is Leucine--tRNA ligase from Xanthomonas campestris pv. campestris (strain B100).